The following is a 396-amino-acid chain: Tryptophan synthase beta chain 1 (396 aa).

Lysine 86 bears the N6-(pyridoxal phosphate)lysine mark.

Belongs to the TrpB family. Tetramer of two alpha and two beta chains. The cofactor is pyridoxal 5'-phosphate.

The catalysed reaction is (1S,2R)-1-C-(indol-3-yl)glycerol 3-phosphate + L-serine = D-glyceraldehyde 3-phosphate + L-tryptophan + H2O. Its pathway is amino-acid biosynthesis; L-tryptophan biosynthesis; L-tryptophan from chorismate: step 5/5. The beta subunit is responsible for the synthesis of L-tryptophan from indole and L-serine. In Vibrio parahaemolyticus serotype O3:K6 (strain RIMD 2210633), this protein is Tryptophan synthase beta chain 1 (trpB1).